The primary structure comprises 612 residues: Chaperone protein DnaK (612 aa).

Phosphothreonine; by autocatalysis is present on Thr173. Basic and acidic residues predominate over residues Asp524–Gln544. 2 disordered regions span residues Asp524–Ala560 and Leu572–Lys612. Residues Glu574–Glu586 show a composition bias toward low complexity. Acidic residues predominate over residues Gln587 to Lys612.

It belongs to the heat shock protein 70 family.

Functionally, acts as a chaperone. This chain is Chaperone protein DnaK, found in Oceanobacillus iheyensis (strain DSM 14371 / CIP 107618 / JCM 11309 / KCTC 3954 / HTE831).